The sequence spans 94 residues: Putative toxin RelE4 (94 aa).

Belongs to the RelE toxin family.

In terms of biological role, toxic component of a type II toxin-antitoxin (TA) system. Its cognate antitoxin is RelB4 (Potential). In Methanocaldococcus jannaschii (strain ATCC 43067 / DSM 2661 / JAL-1 / JCM 10045 / NBRC 100440) (Methanococcus jannaschii), this protein is Putative toxin RelE4 (relE4).